The following is a 441-amino-acid chain: MSIDIDWERATSGPDGELLAERIRSFIHDKFQQMVLPRFIRSVQVTSFNFGTIPPELEIRDLTDPFPDFYEDGDEDLSVSSEEQSPMREQADRYRERIDSWQTNSPGGLEVQMSGRMGFGHPLQLAPDEDGSRLHPLRSPINLGDINPYLFPRSGTPGIPGGTSNLGYFMPLSGLSGSQTPLRAVTRGNPFSGGWPDSPLENESRMGHGQGPPRRRSEVNVDAIQSRPSTVNTGNTLFSRGSVSTGDPRHSHSSQTVLANNPGQAPEANDSPVSAVPPLSGTPPRRMREQKAEDFQVFCRTKYAGNISLSLTAEILLDYPMPSFVGLPLKLNITGLTFDAVAVLAYIRRRIHFCFLSPEDAYALIGPETGGGGGDTMEPNSLRRKNLSLLRKIRVESEIGRKENGKQALKNVGKVEKFVLEQVRRIFEEEFVYPSFWTFLV.

The SMP-LTD domain occupies 1 to 441; that stretch reads MSIDIDWERA…VYPSFWTFLV (441 aa). Disordered regions lie at residues 70–89 and 180–289; these read YEDG…PMRE and TPLR…RMRE. 2 stretches are compositionally biased toward polar residues: residues 226 to 245 and 253 to 263; these read SRPS…SVST and SSQTVLANNPG.

This sequence belongs to the MDM12 family. Component of the ER-mitochondria encounter structure (ERMES) or MDM complex, composed of MMM1, MDM10, MDM12 and MDM34. An MMM1 homodimer associates with one molecule of MDM12 on each side in a pairwise head-to-tail manner, and the SMP-LTD domains of MMM1 and MDM12 generate a continuous hydrophobic tunnel for phospholipid trafficking.

The protein localises to the mitochondrion outer membrane. It localises to the endoplasmic reticulum membrane. Component of the ERMES/MDM complex, which serves as a molecular tether to connect the endoplasmic reticulum (ER) and mitochondria. Components of this complex are involved in the control of mitochondrial shape and protein biogenesis, and function in nonvesicular lipid trafficking between the ER and mitochondria. MDM12 is required for the interaction of the ER-resident membrane protein MMM1 and the outer mitochondrial membrane-resident beta-barrel protein MDM10. The MDM12-MMM1 subcomplex functions in the major beta-barrel assembly pathway that is responsible for biogenesis of all mitochondrial outer membrane beta-barrel proteins, and acts in a late step after the SAM complex. The MDM10-MDM12-MMM1 subcomplex further acts in the TOM40-specific pathway after the action of the MDM12-MMM1 complex. Essential for establishing and maintaining the structure of mitochondria and maintenance of mtDNA nucleoids. The chain is Mitochondrial distribution and morphology protein 12 from Paracoccidioides brasiliensis (strain Pb03).